We begin with the raw amino-acid sequence, 1338 residues long: MSVQTATTENRFQSTLDDNNGNNSESKNIARCPKYEWNANVNDQGPGVIDHSILDQQSDNEINKHYLLQSPNALELDSTLDYIGNAAGHCDTFNLKADKGCKTVNSSLLHENPGEEDETVDYINNELCNKMQDTLCPPSIPIQTSASDEIHKGLGAITDRGSAYNKIAEQSLCVQESTDYLCKMEPKWTVQAFFGDADKLCRNEANNLVDISTTDHKYDHNSSFGIFTLSLDFSDEKCMREDSLVLSGSEKPLSASILEGSALPNSSIDVFTGSVKKTDNIDGFCQGAELSLRDLDYLEVPHQKDSTETPQSKLSLTSEHSVFTSETSEVMLEVDARRVMDKTVESHLPNLRLSSNVGKEDSAPGASLEEFVSGSVPAVAPEELASNLIKDKNTIKNKESHGEAHSLESPARPDSSSSELKDLLSNLSGQNCEDTFIISSPNSGIGSKAFTSTPLPESKNMTFSVPVLESITENNELQQNLDAIKYDLEGLRHSSDSNIVTKPTNKKPAVGSVVGKAKKNEVISFPKPSFKNVKAKVLTRPSLQAKDSNPYASKTSPRSPPSLSNASSPAQSPRPLSSAVKTVQKRSVINQDMKTEAAIAKSQKQPITKQLFPTHSAHVPTHSKHALGKVPRAAALKHTQNETERASSSNSTRSSGSAAAALTCTAGSRVTENKSEKAKTSAKPSAPNVRLMGPNKIEQKGIIQPHFDKAQSLKEAKEGTVSADMDILANIVPLPTKLAIPSSRNLHKELILGIKNVASQPAKGRVQTTVQRRGSLGKNILTIRVSSPPREKPQVTVEGGLNSPKGRPISVKASAANGTGSLPRTRLPCRGTTLQRTASVSSVCSTQSELSNLSTRSTTTTSSIKTEDIPTAKCIRPNSASGALTAKSSIPRGRSQSLKVTQTVTGTKKSPSIIPTLPRSSGPALSLTKKLEARSLQNVEKNKQKTSPRGPVTQAQTPPVDPKSIELTKCKAACEQQRGVIENLKNLLSSSNQRFEALTVVVQQLINQREETLKKRKALSQELLNLRGDLVCASSTCERLEKEKNELLKAYEGILQKVKEEHHAELSDLEEKLKQFYTGECEKLQSIFIEEAEKYKNELQEKVDDLNTTHEAYRLQAETSQIETIHTLKEDYEKSLTELKDAKDKENKILEDSFKEKQAEVEKKILELKDVNESLKEKLKYEEEQRKLTKEKSVQKNPQVMYLEQELESLKAVLEIKNEKLHQQDKKLMQVEKLVETNTTLVERLNKCQQENEDLKARMVNHVALSRQLSTEQEVLQRSLEKESKANKRLSMENEELLWKLHNGDLCSPKKLSPSSPGIPFHPSRNSGSFSSPTVSPR.

Residues 1–27 are compositionally biased toward polar residues; it reads MSVQTATTENRFQSTLDDNNGNNSESK. 2 disordered regions span residues 1-28 and 399-421; these read MSVQ…ESKN and ESHG…SELK. Residues 469-494 adopt a coiled-coil conformation; that stretch reads ESITENNELQQNLDAIKYDLEGLRHS. 2 disordered regions span residues 536–585 and 636–695; these read KVLT…TVQK and LKHT…MGPN. Residues 541–555 show a composition bias toward polar residues; it reads PSLQAKDSNPYASKT. Composition is skewed to low complexity over residues 561 to 573 and 646 to 661; these read PSLS…AQSP and ASSS…AAAA. Residues 731–774 form the F-box domain; that stretch reads IVPLPTKLAIPSSRNLHKELILGIKNVASQPAKGRVQTTVQRRG. 3 disordered regions span residues 788-808, 883-925, and 938-962; these read PPRE…KGRP, ALTA…GPAL, and NVEK…PVDP. Positions 883-910 are enriched in polar residues; it reads ALTAKSSIPRGRSQSLKVTQTVTGTKKS. The stretch at 966–1298 forms a coiled coil; that stretch reads ELTKCKAACE…RLSMENEELL (333 aa). Residues 1309–1338 are disordered; it reads PKKLSPSSPGIPFHPSRNSGSFSSPTVSPR. The span at 1324-1338 shows a compositional bias: polar residues; the sequence is SRNSGSFSSPTVSPR.

This sequence belongs to the MTUS1 family. As to quaternary structure, homodimer. Binds microtubules. Interacts with kif2c, aurkb, incenp and SKP1. Probably part of a SCF (SKP1-CUL1-F-box) protein ligase complex. Present in egg (at protein level).

The protein resides in the nucleus. Its subcellular location is the cytoplasm. The protein localises to the cytoskeleton. It is found in the chromosome. It localises to the midbody. Regulates microtubule dynamics during mitosis by stimulating kif2c. Probably recognizes and binds to some phosphorylated proteins and promotes their ubiquitination and degradation. The polypeptide is Microtubule-associated tumor suppressor 1 homolog (mtus1) (Xenopus laevis (African clawed frog)).